The primary structure comprises 175 residues: Acireductone dioxygenase (175 aa).

Fe(2+) is bound by residues His-81, His-83, Glu-87, and His-126. Ni(2+) contacts are provided by His-81, His-83, Glu-87, and His-126.

The protein belongs to the acireductone dioxygenase (ARD) family. Fe(2+) serves as cofactor. The cofactor is Ni(2+).

The protein resides in the cytoplasm. It is found in the nucleus. The enzyme catalyses 1,2-dihydroxy-5-(methylsulfanyl)pent-1-en-3-one + O2 = 4-methylsulfanyl-2-oxobutanoate + formate + 2 H(+). The catalysed reaction is 1,2-dihydroxy-5-(methylsulfanyl)pent-1-en-3-one + O2 = 3-(methylsulfanyl)propanoate + CO + formate + 2 H(+). Its pathway is amino-acid biosynthesis; L-methionine biosynthesis via salvage pathway; L-methionine from S-methyl-5-thio-alpha-D-ribose 1-phosphate: step 5/6. Catalyzes 2 different reactions between oxygen and the acireductone 1,2-dihydroxy-3-keto-5-methylthiopentene (DHK-MTPene) depending upon the metal bound in the active site. Fe-containing acireductone dioxygenase (Fe-ARD) produces formate and 2-keto-4-methylthiobutyrate (KMTB), the alpha-ketoacid precursor of methionine in the methionine recycle pathway. Ni-containing acireductone dioxygenase (Ni-ARD) produces methylthiopropionate, carbon monoxide and formate, and does not lie on the methionine recycle pathway. The protein is Acireductone dioxygenase of Phaeosphaeria nodorum (strain SN15 / ATCC MYA-4574 / FGSC 10173) (Glume blotch fungus).